We begin with the raw amino-acid sequence, 175 residues long: Universal stress protein A-like protein (175 aa).

11 residues coordinate AMP: Ala-11, Val-12, Asn-13, Ser-26, Cys-27, Val-53, Gly-131, Arg-133, Thr-145, Val-146, and Ser-147.

Belongs to the universal stress protein A family. Homohexamer.

This is Universal stress protein A-like protein from Arabidopsis thaliana (Mouse-ear cress).